A 339-amino-acid chain; its full sequence is tRNA methyltransferase 10 homolog A (339 aa).

Disordered stretches follow at residues 1-90 and 282-339; these read MSSE…HDRK and DKAC…SLPH. Basic and acidic residues predominate over residues 14 to 35; sequence NVDKKQGINEDQEESQKPRLGE. Positions 52–81 form a coiled coil; sequence KQWEEQRELRKQKRKEKRKRKKLERQCQME. Residues 61 to 74 are compositionally biased toward basic residues; that stretch reads RKQKRKEKRKRKKL. The SAM-dependent MTase TRM10-type domain maps to 89-279; sequence RKRVRRDVVH…TILPQRKGAV (191 aa). Residues 300–309 are compositionally biased toward acidic residues; sequence GGSDSDSSEE. Residues 310–330 are compositionally biased toward basic and acidic residues; it reads EYSRNELDSPHEEKQDKENHT. Phosphoserine is present on Ser336.

The protein belongs to the class IV-like SAM-binding methyltransferase superfamily. TRM10 family. As to quaternary structure, interacts with tRNA. As to expression, expressed in embryonic and fetal brain. It is expressed throughout the dorsal telencephalon at 8 and 11 weeks of gestation, with highest expression in ventricular zone and marginal zone. Detected in cerebellar cortex and nuclei, but not in dorsal telencephalon, at later stages.

The protein localises to the nucleus. It localises to the nucleolus. It catalyses the reaction guanosine(9) in tRNA + S-adenosyl-L-methionine = N(1)-methylguanosine(9) in tRNA + S-adenosyl-L-homocysteine + H(+). Its function is as follows. S-adenosyl-L-methionine-dependent guanine N(1)-methyltransferase that catalyzes the formation of N(1)-methylguanine at position 9 (m1G9) in tRNAs. Probably not able to catalyze formation of N(1)-methyladenine at position 9 (m1A9) in tRNAs. This chain is tRNA methyltransferase 10 homolog A (TRMT10A), found in Homo sapiens (Human).